The primary structure comprises 310 residues: Putative HTH-type transcriptional regulatory protein YN1551_1579 (310 aa).

One can recognise an HTH cro/C1-type domain in the interval 125–180; that stretch reads LKHKREEMGYSIGDVAKFLGVSRKAIYDYEKGDSDVSLEVAEKLIDLFGDDIIGDV. Residues 136–155 constitute a DNA-binding region (H-T-H motif); it reads IGDVAKFLGVSRKAIYDYEK.

The sequence is that of Putative HTH-type transcriptional regulatory protein YN1551_1579 from Saccharolobus islandicus (strain Y.N.15.51 / Yellowstone #2) (Sulfolobus islandicus).